The primary structure comprises 314 residues: MADENYTRITEFIFIGLRYHPNLQVFLFLLFLLFYLVTMTGNLGMIILIRVDSRLHTPMYFFLSHLSFVDICFSSVVAPKMLTDFFADKKAISFLGCVLQQWFFGFFVAIECLLLASMAYDRYVAICNPLLYSVAMSQRLCIQLVIGPYAVGFFNTMTHTTAAFRLPFCGSNIINHFFCDMSPILSLICADIRINKLLVFIVAGAVLIVSSTTIIVSYFHILIAILRIRSAEGRRKAFSTCSSHVTAVSILYGTLFFIYVRPSAISSLDLNKVVSVFYTAVIPMLNPLIYSLRNKEVKSAMGRTVAKAKVFLKN.

Residues 1 to 25 (MADENYTRITEFIFIGLRYHPNLQV) lie on the Extracellular side of the membrane. Asparagine 5 is a glycosylation site (N-linked (GlcNAc...) asparagine). A helical transmembrane segment spans residues 26 to 46 (FLFLLFLLFYLVTMTGNLGMI). The Cytoplasmic segment spans residues 47-54 (ILIRVDSR). Residues 55-75 (LHTPMYFFLSHLSFVDICFSS) form a helical membrane-spanning segment. The Extracellular portion of the chain corresponds to 76–99 (VVAPKMLTDFFADKKAISFLGCVL). A disulfide bridge links cysteine 97 with cysteine 189. The chain crosses the membrane as a helical span at residues 100–120 (QQWFFGFFVAIECLLLASMAY). Residues 121–133 (DRYVAICNPLLYS) are Cytoplasmic-facing. A helical transmembrane segment spans residues 134–154 (VAMSQRLCIQLVIGPYAVGFF). The Extracellular portion of the chain corresponds to 155–196 (NTMTHTTAAFRLPFCGSNIINHFFCDMSPILSLICADIRINK). The helical transmembrane segment at 197–217 (LLVFIVAGAVLIVSSTTIIVS) threads the bilayer. Residues 218–237 (YFHILIAILRIRSAEGRRKA) lie on the Cytoplasmic side of the membrane. A helical transmembrane segment spans residues 238–258 (FSTCSSHVTAVSILYGTLFFI). The Extracellular segment spans residues 259 to 271 (YVRPSAISSLDLN). The helical transmembrane segment at 272 to 292 (KVVSVFYTAVIPMLNPLIYSL) threads the bilayer. Residues 293-314 (RNKEVKSAMGRTVAKAKVFLKN) lie on the Cytoplasmic side of the membrane.

The protein belongs to the G-protein coupled receptor 1 family.

Its subcellular location is the cell membrane. Functionally, potential odorant receptor. In Mus musculus (Mouse), this protein is Olfactory receptor 5G9.